The following is a 511-amino-acid chain: Maturase K (511 aa).

It belongs to the intron maturase 2 family. MatK subfamily.

It localises to the plastid. Its subcellular location is the chloroplast. Usually encoded in the trnK tRNA gene intron. Probably assists in splicing its own and other chloroplast group II introns. The chain is Maturase K from Anchomanes difformis (Amorphophallus difformis).